Consider the following 173-residue polypeptide: Crossover junction endodeoxyribonuclease RuvC (173 aa).

Catalysis depends on residues Asp8, Glu68, and Asp140. Residues Asp8, Glu68, and Asp140 each contribute to the Mg(2+) site.

The protein belongs to the RuvC family. As to quaternary structure, homodimer which binds Holliday junction (HJ) DNA. The HJ becomes 2-fold symmetrical on binding to RuvC with unstacked arms; it has a different conformation from HJ DNA in complex with RuvA. In the full resolvosome a probable DNA-RuvA(4)-RuvB(12)-RuvC(2) complex forms which resolves the HJ. Mg(2+) is required as a cofactor.

It is found in the cytoplasm. It catalyses the reaction Endonucleolytic cleavage at a junction such as a reciprocal single-stranded crossover between two homologous DNA duplexes (Holliday junction).. The RuvA-RuvB-RuvC complex processes Holliday junction (HJ) DNA during genetic recombination and DNA repair. Endonuclease that resolves HJ intermediates. Cleaves cruciform DNA by making single-stranded nicks across the HJ at symmetrical positions within the homologous arms, yielding a 5'-phosphate and a 3'-hydroxyl group; requires a central core of homology in the junction. The consensus cleavage sequence is 5'-(A/T)TT(C/G)-3'. Cleavage occurs on the 3'-side of the TT dinucleotide at the point of strand exchange. HJ branch migration catalyzed by RuvA-RuvB allows RuvC to scan DNA until it finds its consensus sequence, where it cleaves and resolves the cruciform DNA. The chain is Crossover junction endodeoxyribonuclease RuvC from Saccharophagus degradans (strain 2-40 / ATCC 43961 / DSM 17024).